A 123-amino-acid chain; its full sequence is Large ribosomal subunit protein bL20 (123 aa).

The segment covering methionine 1 to arginine 15 has biased composition (basic residues). The segment at methionine 1–glycine 23 is disordered.

The protein belongs to the bacterial ribosomal protein bL20 family.

In terms of biological role, binds directly to 23S ribosomal RNA and is necessary for the in vitro assembly process of the 50S ribosomal subunit. It is not involved in the protein synthesizing functions of that subunit. The sequence is that of Large ribosomal subunit protein bL20 from Cutibacterium acnes (strain DSM 16379 / KPA171202) (Propionibacterium acnes).